Reading from the N-terminus, the 502-residue chain is ATP synthase subunit alpha (502 aa).

169 to 176 contacts ATP; it reads GDRQTGKT.

Belongs to the ATPase alpha/beta chains family. In terms of assembly, F-type ATPases have 2 components, CF(1) - the catalytic core - and CF(0) - the membrane proton channel. CF(1) has five subunits: alpha(3), beta(3), gamma(1), delta(1), epsilon(1). CF(0) has three main subunits: a(1), b(2) and c(9-12). The alpha and beta chains form an alternating ring which encloses part of the gamma chain. CF(1) is attached to CF(0) by a central stalk formed by the gamma and epsilon chains, while a peripheral stalk is formed by the delta and b chains.

The protein resides in the cell inner membrane. The catalysed reaction is ATP + H2O + 4 H(+)(in) = ADP + phosphate + 5 H(+)(out). Its function is as follows. Produces ATP from ADP in the presence of a proton gradient across the membrane. The alpha chain is a regulatory subunit. The chain is ATP synthase subunit alpha from Kosmotoga olearia (strain ATCC BAA-1733 / DSM 21960 / TBF 19.5.1).